The sequence spans 474 residues: Gamma-aminobutyric acid receptor subunit beta-1 (474 aa).

Residues 1 to 25 (MWTVQNRESLGLLSFPVMVAMVCCA) form the signal peptide. At 26–245 (HSSNEPSNMS…SFRLKRNIGY (220 aa)) the chain is on the extracellular side. Residues Asn-33 and Asn-105 are each glycosylated (N-linked (GlcNAc...) asparagine). A histamine-binding site is contributed by Tyr-122. Cys-161 and Cys-175 are oxidised to a cystine. An N-linked (GlcNAc...) asparagine glycan is attached at Asn-174. Histamine contacts are provided by residues 181-182 (SY) and Thr-227. 4-aminobutanoate-binding residues include Tyr-182 and Thr-227. A run of 3 helical transmembrane segments spans residues 246-267 (FILQTYMPSTLITILSWVSFWI), 271-293 (ASAARVALGITTVLTMTTISTHL), and 305-327 (AIDIYLMGCFVFVFLALLEYAFV). The Cytoplasmic portion of the chain corresponds to 328 to 451 (NYIFFGKGPQ…DLTDVNSIDK (124 aa)). A helical transmembrane segment spans residues 452–473 (WSRMFFPITFSLFNVVYWLYYV).

The protein belongs to the ligand-gated ion channel (TC 1.A.9) family. Gamma-aminobutyric acid receptor (TC 1.A.9.5) subfamily. GABRB1 sub-subfamily. In terms of assembly, heteropentamer, formed by a combination of alpha (GABRA1-6), beta (GABRB1-3), gamma (GABRG1-3), delta (GABRD), epsilon (GABRE), rho (GABRR1-3), pi (GABRP) and theta (GABRQ) chains, each subunit exhibiting distinct physiological and pharmacological properties. Binds UBQLN1.

It is found in the postsynaptic cell membrane. The protein resides in the cell membrane. It catalyses the reaction chloride(in) = chloride(out). Its activity is regulated as follows. Potentiated by histamine. Functionally, beta subunit of the heteropentameric ligand-gated chloride channel gated by gamma-aminobutyric acid (GABA), a major inhibitory neurotransmitter in the brain. GABA-gated chloride channels, also named GABA(A) receptors (GABAAR), consist of five subunits arranged around a central pore and contain GABA active binding site(s) located at the alpha and beta subunit interface(s). When activated by GABA, GABAARs selectively allow the flow of chloride anions across the cell membrane down their electrochemical gradient. Chloride influx into the postsynaptic neuron following GABAAR opening decreases the neuron ability to generate a new action potential, thereby reducing nerve transmission. Beta-containing GABAARs can simultaneously bind GABA and histamine where histamine binds at the interface of two neighboring beta subunits, which may be involved in the regulation of sleep and wakefulness. The chain is Gamma-aminobutyric acid receptor subunit beta-1 from Rattus norvegicus (Rat).